Here is a 429-residue protein sequence, read N- to C-terminus: Adenylosuccinate synthetase (429 aa).

Residues 12–18 and 40–42 each bind GTP; these read GDEGKGK and GHT. The active-site Proton acceptor is Asp13. Positions 13 and 40 each coordinate Mg(2+). IMP is bound by residues 13–16, 38–41, Thr129, Arg143, Gln223, Thr238, and Arg302; these read DEGK and NAGH. His41 acts as the Proton donor in catalysis. A substrate-binding site is contributed by 298–304; that stretch reads VVTGRKR. Residues Arg304, 330 to 332, and 412 to 414 contribute to the GTP site; these read KLD and STS.

The protein belongs to the adenylosuccinate synthetase family. Homodimer. The cofactor is Mg(2+).

It localises to the cytoplasm. It carries out the reaction IMP + L-aspartate + GTP = N(6)-(1,2-dicarboxyethyl)-AMP + GDP + phosphate + 2 H(+). The protein operates within purine metabolism; AMP biosynthesis via de novo pathway; AMP from IMP: step 1/2. In terms of biological role, plays an important role in the de novo pathway of purine nucleotide biosynthesis. Catalyzes the first committed step in the biosynthesis of AMP from IMP. The protein is Adenylosuccinate synthetase of Bartonella tribocorum (strain CIP 105476 / IBS 506).